The chain runs to 277 residues: Large ribosomal subunit protein uL2 (277 aa).

Disordered regions lie at residues 1 to 23 (MAIK…DFAE), 36 to 58 (PLHK…GGGH), and 219 to 277 (TVRG…RKNK). Over residues 8–20 (PTSNGRRGMTSSD) the composition is skewed to polar residues. Positions 258-277 (KTRKKKNKSDKFIVRRRKNK) are enriched in basic residues.

Belongs to the universal ribosomal protein uL2 family. As to quaternary structure, part of the 50S ribosomal subunit. Forms a bridge to the 30S subunit in the 70S ribosome.

In terms of biological role, one of the primary rRNA binding proteins. Required for association of the 30S and 50S subunits to form the 70S ribosome, for tRNA binding and peptide bond formation. It has been suggested to have peptidyltransferase activity; this is somewhat controversial. Makes several contacts with the 16S rRNA in the 70S ribosome. The protein is Large ribosomal subunit protein uL2 of Bacillus licheniformis (strain ATCC 14580 / DSM 13 / JCM 2505 / CCUG 7422 / NBRC 12200 / NCIMB 9375 / NCTC 10341 / NRRL NRS-1264 / Gibson 46).